Consider the following 127-residue polypeptide: MHDDPRYRVEVEVSPRFLAHQSTPDEGRYAFAYSIRIQNAGAVPARLIARHWQITDGNGRTEQVDGEGVVGEQPRLRPGEAFHYTSGVLLETEQGQMQGHYDMVADDGTEFIAPIAAFVLSVPRTLH.

Residues 3–127 (DDPRYRVEVE…FVLSVPRTLH (125 aa)) form the ApaG domain.

In Xanthomonas oryzae pv. oryzae (strain MAFF 311018), this protein is Protein ApaG.